The chain runs to 540 residues: Beta-secretase (540 aa).

Residues 1-31 form the signal peptide; the sequence is MHFSLPTSRIVVVVPAAAICIVCVLIETCTA. The region spanning 81–435 is the Peptidase A1 domain; it reads YYIEVDIGTP…DRENKRVGFA (355 aa). Catalysis depends on residues aspartate 99 and aspartate 302. 3 cysteine pairs are disulfide-bonded: cysteine 222-cysteine 439, cysteine 291-cysteine 469, and cysteine 345-cysteine 397. The chain crosses the membrane as a helical span at residues 483 to 503; that stretch reads ITAYVLAAICLVCLIPVIVFA. Residues 504 to 540 lie on the Cytoplasmic side of the membrane; that stretch reads LTHQINKRCKGRRGRGVVNHHRLDQEGLAENEPNSDP.

This sequence belongs to the peptidase A1 family.

It is found in the membrane. This chain is Beta-secretase, found in Strongylocentrotus purpuratus (Purple sea urchin).